Consider the following 459-residue polypeptide: NADH oxidase (459 aa).

Asn10 lines the FAD pocket. Residue His11 is the Proton acceptor of the active site. 9 residues coordinate FAD: Ala12, Asp34, Gln35, Cys44, Val81, Ala110, Ser113, Lys143, and Tyr172. The active-site Redox-active is the Cys44. Cys44 bears the Cysteine sulfinic acid (-SO2H) mark. NAD(+)-binding residues include Ile173, Asp192, Tyr201, and Gly256. Residue Asp294 coordinates FAD. NAD(+) is bound at residue Ala310. Leu311, Ala312, and Ser313 together coordinate FAD. Gly341 contacts NAD(+). Position 439 (Phe439) interacts with FAD.

It belongs to the class-III pyridine nucleotide-disulfide oxidoreductase family. It depends on FAD as a cofactor.

The protein localises to the secreted. The protein resides in the cell wall. The catalysed reaction is 2 NADH + O2 + 2 H(+) = 2 NAD(+) + 2 H2O. Functionally, catalyzes the four-electron reduction of molecular oxygen to water. Plays a role in redox balance maintenance. May be involved in mediating bacterial adhesion to host cells. May be considered a potential virulence factor. This Streptococcus pneumoniae (strain ATCC BAA-255 / R6) protein is NADH oxidase.